The chain runs to 202 residues: Peptidyl-tRNA hydrolase (202 aa).

Residue Tyr-14 coordinates tRNA. His-19 serves as the catalytic Proton acceptor. TRNA is bound by residues Tyr-64, Asn-66, and Asn-112.

The protein belongs to the PTH family. Monomer.

Its subcellular location is the cytoplasm. It carries out the reaction an N-acyl-L-alpha-aminoacyl-tRNA + H2O = an N-acyl-L-amino acid + a tRNA + H(+). Hydrolyzes ribosome-free peptidyl-tRNAs (with 1 or more amino acids incorporated), which drop off the ribosome during protein synthesis, or as a result of ribosome stalling. Functionally, catalyzes the release of premature peptidyl moieties from peptidyl-tRNA molecules trapped in stalled 50S ribosomal subunits, and thus maintains levels of free tRNAs and 50S ribosomes. This chain is Peptidyl-tRNA hydrolase, found in Nitrobacter winogradskyi (strain ATCC 25391 / DSM 10237 / CIP 104748 / NCIMB 11846 / Nb-255).